The primary structure comprises 264 residues: tRNA pseudouridine synthase A (264 aa).

The active-site Nucleophile is the Asp-51. Tyr-109 contributes to the substrate binding site.

The protein belongs to the tRNA pseudouridine synthase TruA family. As to quaternary structure, homodimer.

The catalysed reaction is uridine(38/39/40) in tRNA = pseudouridine(38/39/40) in tRNA. Functionally, formation of pseudouridine at positions 38, 39 and 40 in the anticodon stem and loop of transfer RNAs. The protein is tRNA pseudouridine synthase A of Aromatoleum aromaticum (strain DSM 19018 / LMG 30748 / EbN1) (Azoarcus sp. (strain EbN1)).